A 548-amino-acid chain; its full sequence is Chaperonin GroEL (548 aa).

Residues 29–32 (THGP), Lys-50, 86–90 (DGTTT), Gly-414, and Asp-493 contribute to the ATP site.

It belongs to the chaperonin (HSP60) family. In terms of assembly, forms a cylinder of 14 subunits composed of two heptameric rings stacked back-to-back. Interacts with the co-chaperonin GroES.

It localises to the cytoplasm. The enzyme catalyses ATP + H2O + a folded polypeptide = ADP + phosphate + an unfolded polypeptide.. Together with its co-chaperonin GroES, plays an essential role in assisting protein folding. The GroEL-GroES system forms a nano-cage that allows encapsulation of the non-native substrate proteins and provides a physical environment optimized to promote and accelerate protein folding. The polypeptide is Chaperonin GroEL (Desulfatibacillum aliphaticivorans).